We begin with the raw amino-acid sequence, 312 residues long: Aspartate carbamoyltransferase catalytic subunit (312 aa).

The carbamoyl phosphate site is built by Arg58 and Thr59. An L-aspartate-binding site is contributed by Lys86. Carbamoyl phosphate contacts are provided by Arg108, His136, and Gln139. 2 residues coordinate L-aspartate: Arg169 and Arg223. 2 residues coordinate carbamoyl phosphate: Gly264 and Pro265.

It belongs to the aspartate/ornithine carbamoyltransferase superfamily. ATCase family. In terms of assembly, heterododecamer (2C3:3R2) of six catalytic PyrB chains organized as two trimers (C3), and six regulatory PyrI chains organized as three dimers (R2).

It catalyses the reaction carbamoyl phosphate + L-aspartate = N-carbamoyl-L-aspartate + phosphate + H(+). Its pathway is pyrimidine metabolism; UMP biosynthesis via de novo pathway; (S)-dihydroorotate from bicarbonate: step 2/3. In terms of biological role, catalyzes the condensation of carbamoyl phosphate and aspartate to form carbamoyl aspartate and inorganic phosphate, the committed step in the de novo pyrimidine nucleotide biosynthesis pathway. This chain is Aspartate carbamoyltransferase catalytic subunit, found in Desulforamulus reducens (strain ATCC BAA-1160 / DSM 100696 / MI-1) (Desulfotomaculum reducens).